A 225-amino-acid chain; its full sequence is NAD(P)H-quinone oxidoreductase subunit K, chloroplastic (225 aa).

Residues Cys-43, Cys-44, Cys-108, and Cys-139 each contribute to the [4Fe-4S] cluster site.

Belongs to the complex I 20 kDa subunit family. In terms of assembly, NDH is composed of at least 16 different subunits, 5 of which are encoded in the nucleus. Requires [4Fe-4S] cluster as cofactor.

It is found in the plastid. The protein resides in the chloroplast thylakoid membrane. It carries out the reaction a plastoquinone + NADH + (n+1) H(+)(in) = a plastoquinol + NAD(+) + n H(+)(out). The catalysed reaction is a plastoquinone + NADPH + (n+1) H(+)(in) = a plastoquinol + NADP(+) + n H(+)(out). In terms of biological role, NDH shuttles electrons from NAD(P)H:plastoquinone, via FMN and iron-sulfur (Fe-S) centers, to quinones in the photosynthetic chain and possibly in a chloroplast respiratory chain. The immediate electron acceptor for the enzyme in this species is believed to be plastoquinone. Couples the redox reaction to proton translocation, and thus conserves the redox energy in a proton gradient. In Helianthus annuus (Common sunflower), this protein is NAD(P)H-quinone oxidoreductase subunit K, chloroplastic.